A 969-amino-acid chain; its full sequence is RNA polymerase-associated protein RapA (969 aa).

Residues 164–334 (EVGRRYAPRV…FARLRLLDPD (171 aa)) enclose the Helicase ATP-binding domain. 177 to 184 (DEVGLGKT) serves as a coordination point for ATP. The DEAH box motif lies at 280 to 283 (DEAH). A Helicase C-terminal domain is found at 492–668 (RVNWLLELLK…GKSDGLESLI (177 aa)).

It belongs to the SNF2/RAD54 helicase family. RapA subfamily. In terms of assembly, interacts with the RNAP. Has a higher affinity for the core RNAP than for the holoenzyme. Its ATPase activity is stimulated by binding to RNAP.

Functionally, transcription regulator that activates transcription by stimulating RNA polymerase (RNAP) recycling in case of stress conditions such as supercoiled DNA or high salt concentrations. Probably acts by releasing the RNAP, when it is trapped or immobilized on tightly supercoiled DNA. Does not activate transcription on linear DNA. Probably not involved in DNA repair. This is RNA polymerase-associated protein RapA from Aliivibrio fischeri (strain MJ11) (Vibrio fischeri).